Consider the following 147-residue polypeptide: Large ribosomal subunit protein bL9 (147 aa).

This sequence belongs to the bacterial ribosomal protein bL9 family.

Functionally, binds to the 23S rRNA. This Cytophaga hutchinsonii (strain ATCC 33406 / DSM 1761 / CIP 103989 / NBRC 15051 / NCIMB 9469 / D465) protein is Large ribosomal subunit protein bL9.